The sequence spans 228 residues: Ribosomal RNA small subunit methyltransferase G (228 aa).

Residues Gly70, Leu75, 120 to 121 (AE), and Arg138 each bind S-adenosyl-L-methionine. The interval 207 to 228 (RRGDTRGPNRRVSPRRTGGAPA) is disordered.

Belongs to the methyltransferase superfamily. RNA methyltransferase RsmG family.

Its subcellular location is the cytoplasm. In terms of biological role, specifically methylates the N7 position of guanine in position 518 of 16S rRNA. The polypeptide is Ribosomal RNA small subunit methyltransferase G (Mycobacterium marinum (strain ATCC BAA-535 / M)).